The chain runs to 2157 residues: MQPHRVFIFGDQTGGFATGLQQLLLDKTNPSLVYFVDHANLALRQELSRLPSTDRETLPLIGSVQDILTLHKKGERNVVIDSILSTVYHLTCFIYKYGNAGCPYPNGQDIHVTGICVGSLAAAAVSCSRSIGDVIVAGIVAIQAALRVGLRAHQAALLINNRAAPHTHWSYAVSTESLRLDLIKDALAKFAQDMDTSPLSHPYISAIGLDSVTVSGPPSQLHQFWRENTPSHKPIPIPIWAPYHGPHIFGDSDVETIIESLHPIPKLSQQAPLISSGSGVMASQTLADLIRAALQDILLHRLDLPALVGHIKDIFRSSPNQDFAMTPIATNAAAGLVAATAKAAGNTGSVDNEIMDAAALAGSASRATSAKTHDAKIAIIGMSGRFPEAADLDSFWSLLEQGVDAYRPVPPDRFDAHAHHDETGRRKNTSRVLGGCWINQPGLFDPKFFSISPKEAEQSDPAQRLALQTAYEALEMAGVVPDRTQSTQRDRVGVFYGMVSDDWREINSGQNIDTYFIPGGIRAFTPGRINYHFKFSGPSITVDTACSSSLAAIHVACNSLWRGDCDTAVAGGVNVLTNPDIFAGLDRGHFLSTTGNCKTFDDDADGYCRADGVGTVILKRLEDAVMDKDPILAVLNSAYTNHSAEAVSITRPHAGAQELIFSKLLRETGIHPHDVSYIEMHGTGTQAGDATEMSSVLRTFASDTSRLSNQTLHLGSAKSNVGHGESASGVTSLIKVLLMMKHNTIPPHCGIKGRINHRFPTDLRERNVFIASQPVAWNRPHAGSGKRRVFINNFSAAGGNSALLLEDAPAGEHPETKDPRSTHIVAVSAKSSTSLANNLKRLKDFVQDNIYNLDSLSKLSYTTTARRIHYPFRAAMTASSRDQLLQGIESVLLRDEMPKPCKGQKNIGFVFSGQGAQYAGMGRHLFQNNHTFRTQILACNRICLSQGFPSILEIFTQDVDMNSLEPLVFQLGTTCLQTSLVSFWKSLGVTPDFCIGHSLGEYAALQAAGVLSVSDTIYLTGIRARMLQEKCSAGSHAMLAVRAPLARVNALLDPGIHEVTCLNGPHDVVIGGRVADVEDLEKELAKEDIKAVKVSVPFAFHSTQVDPILGEFCAAARGVPFQTQNIPVISTLLGEVVQPETTGVFGPEYLKRHCREPVNFAAAVQAGRDANLIHAGTVFVEIGPHPVCLALLKSNMGPDAVTLASLHRKDDGWKVLADTLAALYRSGLKINWDELHRDFASCQEVLPLPSYSWDNKNYWIQYVHNWTLTKGDEPAAVAEATALQAPDICTSSVQKIIQQTDGPGSLVTIVAQSDFGSARLAEVAQGHKVNGEMLCTSSLYAEIGMTLGRQLLEKHRPDLQGYSTEIQDMSVDKPLILKDQNKQTLFRAEVVHDKSTHTAAMSIYSVDSAGNKTVDHARCLLCFADPNSWLDEWERTYYLIDRSVRWLEARAEQGTDSLLSKGIVYKLFSSLVDYSPSFKGLQEVILNSGDREATAKVRLQAEKGDFGCNPMWIDSFGQLTGFLMNGHDFTGKDEVFINHGWRSMRCAKPFRKDAVYRTYIRMQHVEKTKYRGDLYIIEDGVIIGVFGGMTFLGMSRSLLNKVLPPRRGAEAINTPHPVAAAQEGMAASAKDTERRPLDIPTRAQRQPNSPPTGTLGRILAILSEEVGLSLETLTDDLVFADYGVDSLLSLTITGRIREELDLDMDSSIFTHYSTLGELKEFLGADQNPDDAVACESSNGQHTPQTSDKGSGTLAAQKPDDDTGSDTTLHRVCAIIAEEVGISVQELSSSQDFQELGIDSLSSLTILSRVREELQLDLESDFFDTHPSFCSLQKALCGTEAASNGAPEANETTPSSHRLESDLRTITWHSGQNIVASPPHATSILVSGSPSTARMILVLFPDGSGSAASYGALAPKIRRDIAVYALNCPWRTNGEEILRLGVSLDQMVAKHLVEVGRILDRHQHCRAGSGNASVGLALGGWSAGGILALEAVRQLREAGVAVQKMVLLDAPNPIGLQNPPPRMFHFLDELGILGAGKGKAPAWVLRHFDAMVTLLKSYRPRRLGAEDAPKCLIVYARDGICKDPDGPRMDTKPDDAREMLWLLYNRVDFSAEGWKSLVGQQNLAVGVVEDVNHFSMMNPGPKMAEMGDLIGEFLLGPS.

An N-terminal acylcarrier protein transacylase domain (SAT) region spans residues 7–244; the sequence is FIFGDQTGGF…IPIPIWAPYH (238 aa). Residues 374-807 form the Ketosynthase family 3 (KS3) domain; sequence DAKIAIIGMS…GGNSALLLED (434 aa). Active-site for beta-ketoacyl synthase activity residues include cysteine 546, histidine 681, and histidine 723. The interval 908-1213 is malonyl-CoA:ACP transacylase (MAT) domain; that stretch reads GFVFSGQGAQ…ASLHRKDDGW (306 aa). Serine 998 (for acyl/malonyl transferase activity) is an active-site residue. Positions 1290 to 1605 are product template (PT) domain; sequence TSSVQKIIQQ…RSLLNKVLPP (316 aa). An N-terminal hotdog fold region spans residues 1294–1428; sequence QKIIQQTDGP…CLLCFADPNS (135 aa). The PKS/mFAS DH domain maps to 1294 to 1600; it reads QKIIQQTDGP…FLGMSRSLLN (307 aa). The active-site Proton acceptor; for dehydratase activity is histidine 1327. The interval 1455-1600 is C-terminal hotdog fold; the sequence is TDSLLSKGIV…FLGMSRSLLN (146 aa). Aspartate 1514 functions as the Proton donor; for dehydratase activity in the catalytic mechanism. Residues 1629 to 1653 are disordered; that stretch reads AKDTERRPLDIPTRAQRQPNSPPTG. One can recognise a Carrier 1 domain in the interval 1649 to 1726; the sequence is SPPTGTLGRI…ELKEFLGADQ (78 aa). Serine 1686 carries the O-(pantetheine 4'-phosphoryl)serine modification. The tract at residues 1729-1765 is disordered; sequence DDAVACESSNGQHTPQTSDKGSGTLAAQKPDDDTGSD. The segment covering 1735-1749 has biased composition (polar residues); it reads ESSNGQHTPQTSDKG. A Carrier 2 domain is found at 1765–1839; sequence DTTLHRVCAI…SLQKALCGTE (75 aa). Position 1799 is an O-(pantetheine 4'-phosphoryl)serine (serine 1799). The thioesterase (TE) domain stretch occupies residues 1875–2151; that stretch reads ASPPHATSIL…MAEMGDLIGE (277 aa). The active-site For thioesterase activity is the serine 1981.

Its function is as follows. Polyketide synthase; part of the Pks2 gene cluster that mediates the formation of infectious structures (appressoria), enabling these fungi to kill insects faster. The product of the Pks2 gene cluster is different from the one of Pks1 and has still not been identified. This is Polyketide synthase 2 from Metarhizium guizhouense (strain ARSEF 977).